An 800-amino-acid chain; its full sequence is Integrin beta-5 (800 aa).

The signal sequence occupies residues 1–24; sequence MPRAPALLFSCLLGLCALVPRLPG. The Extracellular portion of the chain corresponds to 25-722; the sequence is LNICTSGSAT…PECGTAPSAM (698 aa). The region spanning 27-76 is the PSI domain; the sequence is ICTSGSATSCEECLLIHPKCAWCFKEDFGSLRSVTSRCDLKANLIRNGCG. Cystine bridges form between C28-C46, C36-C463, C39-C64, C49-C75, C202-C211, C259-C300, C401-C413, C433-C461, C465-C484, C476-C487, C489-C498, C500-C530, C513-C528, C522-C533, C535-C548, C550-C571, C555-C569, C563-C574, and C576-C585. The VWFA domain maps to 136–378; the sequence is YPVDLYYLMD…QLIINAYNSI (243 aa). The Mg(2+) site is built by S147 and S149. Ca(2+) is bound by residues S149, D152, D153, and D184. Residues N242, D244, P246, and E247 each coordinate Ca(2+). E247 contributes to the Mg(2+) binding site. The N-linked (GlcNAc...) asparagine glycan is linked to N347. G362 contacts Ca(2+). I-EGF domains follow at residues 465–499, 500–549, 550–586, and 587–626; these read CSAG…TRCE, CQEG…SFCE, CDNF…DNCN, and CSTD…ETCE. N479 is a glycosylation site (N-linked (GlcNAc...) asparagine). The N-linked (GlcNAc...) asparagine glycan is linked to N552. N586 is a glycosylation site (N-linked (GlcNAc...) asparagine). 9 cysteine pairs are disulfide-bonded: C587–C610, C594–C608, C602–C613, C615–C625, C628–C631, C635–C683, C641–C662, C644–C658, and C691–C715. N655 and N706 each carry an N-linked (GlcNAc...) asparagine glycan. The helical transmembrane segment at 723–743 threads the bilayer; the sequence is TILLAVVGSILLTGFALLVIW. Residues 744–800 are Cytoplasmic-facing; the sequence is KLLVTIHDRREFAKFQSERSRARYEMASNPLYRKPISTHTVDFTFNKFNKSYNGTVD. Residue S771 is modified to Phosphoserine.

This sequence belongs to the integrin beta chain family. As to quaternary structure, heterodimer of an alpha and a beta subunit. Beta-5 (ITGB5) associates with alpha-V (ITGAV). Interacts with MYO10. Interacts with DAB2. Integrin ITGAV:ITGB5 interacts with FBLN5 (via N-terminus). ITGAV:ITGB5 interacts with CCN3. Interacts with tensin TNS3; TNS3 also interacts with PEAK1, thus acting as an adapter molecule to bridge the association of PEAK1 with ITGB5.

It localises to the cell membrane. Integrin alpha-V/beta-5 (ITGAV:ITGB5) is a receptor for fibronectin. It recognizes the sequence R-G-D in its ligand. The sequence is that of Integrin beta-5 (ITGB5) from Bos taurus (Bovine).